A 219-amino-acid chain; its full sequence is MAAAVSAKLVKDLRDKTGAGMMDCKKALAATDGDADKAIEWLRQKGIASAEKKSGRTAAEGAIGSYIHTGARVGVLIEINCETDFVARGDMFQELLRDVSMQVAACPGVEYVNTDDIPSEIREREKAIEMGRDDLDGKPEQMKEKIVEGRINKRLKELALMEQPFIKDSSLTVAELVKQTAGKIGENVKVRRFTRYTLGEGIEVEENDFAAEVASMTKG.

An involved in Mg(2+) ion dislocation from EF-Tu region spans residues 83 to 86; the sequence is TDFV.

This sequence belongs to the EF-Ts family.

The protein localises to the cytoplasm. Functionally, associates with the EF-Tu.GDP complex and induces the exchange of GDP to GTP. It remains bound to the aminoacyl-tRNA.EF-Tu.GTP complex up to the GTP hydrolysis stage on the ribosome. The polypeptide is Elongation factor Ts (Synechococcus sp. (strain WH7803)).